A 213-amino-acid chain; its full sequence is Orotate phosphoribosyltransferase (213 aa).

Lysine 26 contacts 5-phospho-alpha-D-ribose 1-diphosphate. An orotate-binding site is contributed by 34–35; it reads FF. 5-phospho-alpha-D-ribose 1-diphosphate-binding positions include 72–73, arginine 99, lysine 100, lysine 103, histidine 105, and 124–132; these read YK and DDVITAGTA. Threonine 128 and arginine 156 together coordinate orotate.

Belongs to the purine/pyrimidine phosphoribosyltransferase family. PyrE subfamily. Homodimer. It depends on Mg(2+) as a cofactor.

The catalysed reaction is orotidine 5'-phosphate + diphosphate = orotate + 5-phospho-alpha-D-ribose 1-diphosphate. It participates in pyrimidine metabolism; UMP biosynthesis via de novo pathway; UMP from orotate: step 1/2. In terms of biological role, catalyzes the transfer of a ribosyl phosphate group from 5-phosphoribose 1-diphosphate to orotate, leading to the formation of orotidine monophosphate (OMP). The polypeptide is Orotate phosphoribosyltransferase (Salmonella choleraesuis (strain SC-B67)).